Here is a 1159-residue protein sequence, read N- to C-terminus: ATP-dependent helicase/deoxyribonuclease subunit B (1159 aa).

Belongs to the helicase family. AddB/RexB type 2 subfamily. As to quaternary structure, heterodimer of AddA and RexB. Requires Mg(2+) as cofactor.

In terms of biological role, the heterodimer acts as both an ATP-dependent DNA helicase and an ATP-dependent, dual-direction single-stranded exonuclease. Recognizes the chi site generating a DNA molecule suitable for the initiation of homologous recombination. This subunit has 5' -&gt; 3' nuclease activity but not helicase activity. This chain is ATP-dependent helicase/deoxyribonuclease subunit B, found in Leuconostoc mesenteroides subsp. mesenteroides (strain ATCC 8293 / DSM 20343 / BCRC 11652 / CCM 1803 / JCM 6124 / NCDO 523 / NBRC 100496 / NCIMB 8023 / NCTC 12954 / NRRL B-1118 / 37Y).